The primary structure comprises 131 residues: Phosphoribosyl-AMP cyclohydrolase (131 aa).

Position 78 (aspartate 78) interacts with Mg(2+). Cysteine 79 provides a ligand contact to Zn(2+). Residues aspartate 80 and aspartate 82 each contribute to the Mg(2+) site. The Zn(2+) site is built by cysteine 96 and cysteine 103.

This sequence belongs to the PRA-CH family. Homodimer. It depends on Mg(2+) as a cofactor. Requires Zn(2+) as cofactor.

It localises to the cytoplasm. The catalysed reaction is 1-(5-phospho-beta-D-ribosyl)-5'-AMP + H2O = 1-(5-phospho-beta-D-ribosyl)-5-[(5-phospho-beta-D-ribosylamino)methylideneamino]imidazole-4-carboxamide. Its pathway is amino-acid biosynthesis; L-histidine biosynthesis; L-histidine from 5-phospho-alpha-D-ribose 1-diphosphate: step 3/9. Its function is as follows. Catalyzes the hydrolysis of the adenine ring of phosphoribosyl-AMP. The sequence is that of Phosphoribosyl-AMP cyclohydrolase from Thioalkalivibrio sulfidiphilus (strain HL-EbGR7).